We begin with the raw amino-acid sequence, 99 residues long: DNA-directed RNA polymerase subunit omega (99 aa).

Positions 55 to 99 (EAGTVISDPNPEEKRERLRIEREERKRQREQEQKELENRLRDEKN) are disordered. The segment covering 65-99 (PEEKRERLRIEREERKRQREQEQKELENRLRDEKN) has biased composition (basic and acidic residues).

The protein belongs to the RNA polymerase subunit omega family. The RNAP catalytic core consists of 2 alpha, 1 beta, 1 beta' and 1 omega subunit. When a sigma factor is associated with the core the holoenzyme is formed, which can initiate transcription.

The catalysed reaction is RNA(n) + a ribonucleoside 5'-triphosphate = RNA(n+1) + diphosphate. Its function is as follows. Promotes RNA polymerase assembly. Latches the N- and C-terminal regions of the beta' subunit thereby facilitating its interaction with the beta and alpha subunits. In Enterococcus faecalis (strain ATCC 700802 / V583), this protein is DNA-directed RNA polymerase subunit omega.